The following is a 312-amino-acid chain: Olfactory receptor 7G3 (312 aa).

Residues 1–25 (MKAGNFSDTPEFFLLGLSGDPELQP) are Extracellular-facing. N5 carries an N-linked (GlcNAc...) asparagine glycan. The helical transmembrane segment at 26–46 (ILFMLFLSMYLATMLGNLLII) threads the bilayer. Residues 47 to 54 (LAVNSDSH) are Cytoplasmic-facing. Residues 55–75 (LHTPMYFLLSILSLVDICFTS) traverse the membrane as a helical segment. The Extracellular segment spans residues 76–99 (TTMPKMLVNIQAQAQSINYTGCLT). N-linked (GlcNAc...) asparagine glycosylation is present at N93. An intrachain disulfide couples C97 to C189. Residues 100-120 (QICFVLVFVGLENGILVMMAY) form a helical membrane-spanning segment. Residues 121-139 (DRFVAICHPLRYNVIMNPK) lie on the Cytoplasmic side of the membrane. A helical membrane pass occupies residues 140-160 (LCGLLLLLSFIVSVLDALLHT). Topologically, residues 161-197 (LMVLQLTFCIDLEIPHFFCELAHILKLACSDVLINNI) are extracellular. The chain crosses the membrane as a helical span at residues 198–217 (LVYLVTSLLGVVPLSGIIFS). Residues 218–237 (YTRIVSSVMKIPSAGGKYKA) are Cytoplasmic-facing. A helical membrane pass occupies residues 238-258 (FSICGSHLIVVSLFYGTGFGV). The Extracellular segment spans residues 259–271 (YLSSGATHSSRKG). A helical membrane pass occupies residues 272-292 (AIASVMYTVVTPMLNPLIYSL). Residues 293–312 (RNKDMLKALRKLISRIPSFH) lie on the Cytoplasmic side of the membrane.

It belongs to the G-protein coupled receptor 1 family.

It localises to the cell membrane. Odorant receptor. The sequence is that of Olfactory receptor 7G3 (OR7G3) from Homo sapiens (Human).